A 523-amino-acid polypeptide reads, in one-letter code: Cytochrome P450 52-N1 (523 aa).

Residues 5–25 (AVLGAFAAFLLYMDVLYPFVI) traverse the membrane as a helical segment. Cys-469 serves as a coordination point for heme.

Belongs to the cytochrome P450 family. The cofactor is heme.

The protein resides in the membrane. The enzyme catalyses an omega-methyl-long-chain fatty acid + reduced [NADPH--hemoprotein reductase] + O2 = an omega-hydroxy-long-chain fatty acid + oxidized [NADPH--hemoprotein reductase] + H2O + H(+). It catalyses the reaction (9Z,12Z)-octadecadienoate + reduced [NADPH--hemoprotein reductase] + O2 = 18-hydroxy-(9Z,12Z)-octadecadienoate + oxidized [NADPH--hemoprotein reductase] + H2O + H(+). It carries out the reaction (9Z)-octadecenoate + reduced [NADPH--hemoprotein reductase] + O2 = 18-hydroxy-(9Z)-octadecenoate + oxidized [NADPH--hemoprotein reductase] + H2O + H(+). The catalysed reaction is hexadecanoate + reduced [NADPH--hemoprotein reductase] + O2 = 16-hydroxyhexadecanoate + oxidized [NADPH--hemoprotein reductase] + H2O + H(+). The enzyme catalyses (9Z)-hexadecenoate + reduced [NADPH--hemoprotein reductase] + O2 = (9Z)-16-hydroxyhexadec-9-enoate + oxidized [NADPH--hemoprotein reductase] + H2O + H(+). It catalyses the reaction octadecanoate + reduced [NADPH--hemoprotein reductase] + O2 = 18-hydroxyoctadecanoate + oxidized [NADPH--hemoprotein reductase] + H2O + H(+). Catalyzes the terminal (at the omega-position) hydroxylation of a fatty acid. Probably involved in alkane metabolism. Linoleic acid is the preferred substrate, but it acts on various other C-16, C-18 and C-20 saturated and unsaturated fatty acids, namely palmitic, palmitoleic, stearic, oleic, alpha-linoleic, arachidonic and myristic acid. The polypeptide is Cytochrome P450 52-N1 (Starmerella bombicola (Yeast)).